A 75-amino-acid polypeptide reads, in one-letter code: U6-lycotoxin-Ls1g (75 aa).

Positions 1–21 (MKLLLFTALVLVVISLIEVEA) are cleaved as a signal peptide. Residues 22-25 (ENER) constitute a propeptide that is removed on maturation.

Belongs to the neurotoxin 19 (CSTX) family. 06 (U6-Lctx) subfamily. In terms of processing, contains 4 disulfide bonds. As to expression, expressed by the venom gland.

It is found in the secreted. The sequence is that of U6-lycotoxin-Ls1g from Lycosa singoriensis (Wolf spider).